Here is a 179-residue protein sequence, read N- to C-terminus: Methylated-DNA--protein-cysteine methyltransferase (179 aa).

Residue Cys130 is the Nucleophile; methyl group acceptor of the active site.

It belongs to the MGMT family.

It localises to the cytoplasm. The enzyme catalyses a 6-O-methyl-2'-deoxyguanosine in DNA + L-cysteinyl-[protein] = S-methyl-L-cysteinyl-[protein] + a 2'-deoxyguanosine in DNA. It carries out the reaction a 4-O-methyl-thymidine in DNA + L-cysteinyl-[protein] = a thymidine in DNA + S-methyl-L-cysteinyl-[protein]. Involved in the cellular defense against the biological effects of O6-methylguanine (O6-MeG) and O4-methylthymine (O4-MeT) in DNA. Repairs the methylated nucleobase in DNA by stoichiometrically transferring the methyl group to a cysteine residue in the enzyme. This is a suicide reaction: the enzyme is irreversibly inactivated. The sequence is that of Methylated-DNA--protein-cysteine methyltransferase from Haemophilus influenzae (strain ATCC 51907 / DSM 11121 / KW20 / Rd).